A 34-amino-acid polypeptide reads, in one-letter code: Photosystem II reaction center protein Psb30 (34 aa).

A helical transmembrane segment spans residues 7–27; it reads VAQLLALFVIITSGPAIIILI.

The protein belongs to the Psb30/Ycf12 family. As to quaternary structure, PSII is composed of 1 copy each of membrane proteins PsbA, PsbB, PsbC, PsbD, PsbE, PsbF, PsbH, PsbI, PsbJ, PsbK, PsbL, PsbM, PsbT, PsbX, PsbY, PsbZ, Psb30/Ycf12, peripheral proteins of the oxygen-evolving complex and a large number of cofactors. It forms dimeric complexes.

Its subcellular location is the plastid. The protein localises to the chloroplast thylakoid membrane. In terms of biological role, a core subunit of photosystem II (PSII), probably helps stabilize the reaction center. The protein is Photosystem II reaction center protein Psb30 of Guillardia theta (Cryptophyte).